An 81-amino-acid polypeptide reads, in one-letter code: ATP synthase subunit c (81 aa).

The next 2 helical transmembrane spans lie at 3–23 (PLIA…GAIG) and 57–77 (LAFM…LLFA).

Belongs to the ATPase C chain family. As to quaternary structure, F-type ATPases have 2 components, F(1) - the catalytic core - and F(0) - the membrane proton channel. F(1) has five subunits: alpha(3), beta(3), gamma(1), delta(1), epsilon(1). F(0) has four main subunits: a(1), b(1), b'(1) and c(10-14). The alpha and beta chains form an alternating ring which encloses part of the gamma chain. F(1) is attached to F(0) by a central stalk formed by the gamma and epsilon chains, while a peripheral stalk is formed by the delta, b and b' chains.

It is found in the cellular thylakoid membrane. Its function is as follows. F(1)F(0) ATP synthase produces ATP from ADP in the presence of a proton or sodium gradient. F-type ATPases consist of two structural domains, F(1) containing the extramembraneous catalytic core and F(0) containing the membrane proton channel, linked together by a central stalk and a peripheral stalk. During catalysis, ATP synthesis in the catalytic domain of F(1) is coupled via a rotary mechanism of the central stalk subunits to proton translocation. Key component of the F(0) channel; it plays a direct role in translocation across the membrane. A homomeric c-ring of between 10-14 subunits forms the central stalk rotor element with the F(1) delta and epsilon subunits. The protein is ATP synthase subunit c of Trichodesmium erythraeum (strain IMS101).